The chain runs to 105 residues: Heat shock protein HspQ (105 aa).

The disordered stretch occupies residues 74–105; that stretch reads SSELQDERPEQPSMDELAQTIRKQRQAPRLRN. Residues 95 to 105 show a composition bias toward basic residues; the sequence is RKQRQAPRLRN.

It belongs to the HspQ family.

The protein localises to the cytoplasm. Involved in the degradation of certain denaturated proteins, including DnaA, during heat shock stress. This Shigella dysenteriae serotype 1 (strain Sd197) protein is Heat shock protein HspQ.